A 275-amino-acid chain; its full sequence is 4-diphosphocytidyl-2-C-methyl-D-erythritol kinase (275 aa).

Residue Lys14 is part of the active site. 98-108 (PMGAGLGGGSS) contacts ATP. Asp140 is a catalytic residue.

The protein belongs to the GHMP kinase family. IspE subfamily.

It carries out the reaction 4-CDP-2-C-methyl-D-erythritol + ATP = 4-CDP-2-C-methyl-D-erythritol 2-phosphate + ADP + H(+). Its pathway is isoprenoid biosynthesis; isopentenyl diphosphate biosynthesis via DXP pathway; isopentenyl diphosphate from 1-deoxy-D-xylulose 5-phosphate: step 3/6. Its function is as follows. Catalyzes the phosphorylation of the position 2 hydroxy group of 4-diphosphocytidyl-2C-methyl-D-erythritol. This Francisella tularensis subsp. tularensis (strain WY96-3418) protein is 4-diphosphocytidyl-2-C-methyl-D-erythritol kinase.